We begin with the raw amino-acid sequence, 1440 residues long: Genome polyprotein (1440 aa).

Residues 32–53 (GGNEGSIMWLASLAVVIACAGA) constitute a propeptide, ER anchor for the capsid protein C, removed in mature form by serine protease NS3. The helical transmembrane segment at 36 to 56 (GSIMWLASLAVVIACAGAMKL) threads the bilayer. At 57–180 (SNFQGKLLMT…ATRYLMKTEN (124 aa)) the chain is on the extracellular side. N-linked (GlcNAc...) asparagine; by host glycosylation is present at N68. A helical transmembrane segment spans residues 181-201 (WIVRNPGYAFLAAILGWMLGS). The Cytoplasmic segment spans residues 202–207 (NNGQRR). The chain crosses the membrane as a helical span at residues 208–222 (WYFTILLLLVAPAYS). Topologically, residues 223–674 (FNCLGMGNRD…QVFGGAFRTL (452 aa)) are extracellular. Disulfide bonds link C225–C252, C282–C338, C282–C343, C296–C327, C314–C338, and C314–C343. A fusion peptide region spans residues 320-333 (DRGWGNGCGLFGKG). N376 carries N-linked (GlcNAc...) asparagine; by host glycosylation. 2 cysteine pairs are disulfide-bonded: C412/C509 and C526/C557. Residues 675-695 (FGGMSWITQGLMGALLLWMGV) traverse the membrane as a helical segment. Residues 696 to 701 (NARDRS) are Cytoplasmic-facing. The helical transmembrane segment at 702-722 (IALAFLATGGVLVFLATNVHA) threads the bilayer. At 723–1147 (DTGCAIDITR…AFAEANSGGD (425 aa)) the chain is on the extracellular side. 6 disulfides stabilise this stretch: C726/C737, C777/C865, C901/C945, C1002/C1051, C1013/C1034, and C1035/C1038. N-linked (GlcNAc...) asparagine; by host glycosylation is found at N852 and N929. A helical membrane pass occupies residues 1148-1168 (VLHLALIAVFKIQPAFLVMNM). Residues 1169 to 1178 (LSTRWTNQEN) lie on the Cytoplasmic side of the membrane. Residues 1179–1199 (VVLVLGAAFFHLASVDLQIGV) form a helical membrane-spanning segment. A topological domain (lumenal) is located at residue H1200. Residues 1201–1221 (GILNAAAIAWMIVRAITFPTT) form a helical membrane-spanning segment. The Cytoplasmic portion of the chain corresponds to 1222 to 1237 (SSVTMPVLALLTPGMR). A helical membrane pass occupies residues 1238–1258 (ALYLDTYRIILLVIGICSLLQ). Residues 1259–1269 (ERKKTMAKKKG) are Lumenal-facing. Residues 1270–1290 (AVLLGLALTSTGWFSPTTIAA) form a helical membrane-spanning segment. Residues 1291–1302 (GLMVCNPNKKRG) lie on the Cytoplasmic side of the membrane. A helical membrane pass occupies residues 1303–1323 (WPATEFLSAVGLMFAIVGGLA). Over 1324–1326 (ELD) the chain is Lumenal. The helical transmembrane segment at 1327–1347 (IESMSIPFMLAGLMAVSYVVS) threads the bilayer. At 1348-1404 (GKATDMWLERAADISWEMDAAITGSSRRLDVKLDDDGDFHLIDDPGVPWKVWVLRMS) the chain is on the cytoplasmic side. The tract at residues 1355–1394 (LERAADISWEMDAAITGSSRRLDVKLDDDGDFHLIDDPGV) is interacts with and activates NS3 protease. Positions 1405 to 1425 (CIGLAALTPWAIVPAAFGYWL) form an intramembrane region, helical. The Cytoplasmic portion of the chain corresponds to 1426-1440 (TLKTTKRGGVFWDTP).

As to quaternary structure, homodimer. Interacts (via N-terminus) with host EXOC1 (via C-terminus); this interaction results in EXOC1 degradation through the proteasome degradation pathway. In terms of assembly, forms heterodimers with envelope protein E in the endoplasmic reticulum and Golgi. Homodimer; in the endoplasmic reticulum and Golgi. Interacts with protein prM. Interacts with non-structural protein 1. As to quaternary structure, homodimer; Homohexamer when secreted. Interacts with envelope protein E. NS1 interacts with NS4B. Interacts with host complement protein CFH; this interaction leads to the degradation of C3. In terms of assembly, interacts (via N-terminus) with serine protease NS3. Forms a heterodimer with serine protease NS3. May form homooligomers. As to quaternary structure, forms a heterodimer with NS2B. Interacts with non-structural protein 2A (via N-terminus). Interacts with NS4B. Interacts with unphosphorylated RNA-directed RNA polymerase NS5; this interaction stimulates RNA-directed RNA polymerase NS5 guanylyltransferase activity. The cofactor is Mn(2+). Mg(2+) serves as cofactor. Specific enzymatic cleavages in vivo yield mature proteins. Cleavages in the lumen of endoplasmic reticulum are performed by host signal peptidase, whereas cleavages in the cytoplasmic side are performed by serine protease NS3. Signal cleavage at the 2K-4B site requires a prior NS3 protease-mediated cleavage at the 4A-2K site. In terms of processing, cleaved in post-Golgi vesicles by a host furin, releasing the mature small envelope protein M, and peptide pr. This cleavage is incomplete as up to 30% of viral particles still carry uncleaved prM. Post-translationally, N-glycosylated. N-glycosylated. The excreted form is glycosylated and this is required for efficient secretion of the protein from infected cells. In terms of processing, RNA-directed RNA polymerase NS5: Phosphorylated on serines residues. This phosphorylation may trigger NS5 nuclear localization.

The protein resides in the virion. Its subcellular location is the host nucleus. The protein localises to the host cytoplasm. It localises to the host perinuclear region. It is found in the secreted. The protein resides in the virion membrane. Its subcellular location is the host endoplasmic reticulum membrane. The catalysed reaction is Selective hydrolysis of -Xaa-Xaa-|-Yaa- bonds in which each of the Xaa can be either Arg or Lys and Yaa can be either Ser or Ala.. It carries out the reaction a ribonucleoside 5'-triphosphate + H2O = a ribonucleoside 5'-diphosphate + phosphate + H(+). The enzyme catalyses ATP + H2O = ADP + phosphate + H(+). Functionally, plays a role in virus budding by binding to the cell membrane and gathering the viral RNA into a nucleocapsid that forms the core of a mature virus particle. During virus entry, may induce genome penetration into the host cytoplasm after hemifusion induced by the surface proteins. Can migrate to the cell nucleus where it modulates host functions. Overcomes the anti-viral effects of host EXOC1 by sequestering and degrading the latter through the proteasome degradation pathway. Inhibits RNA silencing by interfering with host Dicer. In terms of biological role, prevents premature fusion activity of envelope proteins in trans-Golgi by binding to envelope protein E at pH 6.0. After virion release in extracellular space, gets dissociated from E dimers. Its function is as follows. Acts as a chaperone for envelope protein E during intracellular virion assembly by masking and inactivating envelope protein E fusion peptide. prM is the only viral peptide matured by host furin in the trans-Golgi network probably to avoid catastrophic activation of the viral fusion activity in acidic Golgi compartment prior to virion release. prM-E cleavage is inefficient, and many virions are only partially matured. These uncleaved prM would play a role in immune evasion. Functionally, may play a role in virus budding. Exerts cytotoxic effects by activating a mitochondrial apoptotic pathway through M ectodomain. May display a viroporin activity. Binds to host cell surface receptor and mediates fusion between viral and cellular membranes. Envelope protein is synthesized in the endoplasmic reticulum in the form of heterodimer with protein prM. They play a role in virion budding in the ER, and the newly formed immature particle is covered with 60 spikes composed of heterodimer between precursor prM and envelope protein E. The virion is transported to the Golgi apparatus where the low pH causes dissociation of PrM-E heterodimers and formation of E homodimers. prM-E cleavage is inefficient, and many virions are only partially matured. These uncleaved prM would play a role in immune evasion. In terms of biological role, involved in immune evasion, pathogenesis and viral replication. Once cleaved off the polyprotein, is targeted to three destinations: the viral replication cycle, the plasma membrane and the extracellular compartment. Essential for viral replication. Required for formation of the replication complex and recruitment of other non-structural proteins to the ER-derived membrane structures. Excreted as a hexameric lipoparticle that plays a role against host immune response. Antagonizing the complement function. Binds to the host macrophages and dendritic cells. Inhibits signal transduction originating from Toll-like receptor 3 (TLR3). Its function is as follows. Component of the viral RNA replication complex that functions in virion assembly and antagonizes the host alpha/beta interferon antiviral response. Functionally, required cofactor for the serine protease function of NS3. May have membrane-destabilizing activity and form viroporins. Displays three enzymatic activities: serine protease, NTPase and RNA helicase. NS3 serine protease, in association with NS2B, performs its autocleavage and cleaves the polyprotein at dibasic sites in the cytoplasm: C-prM, NS2A-NS2B, NS2B-NS3, NS3-NS4A, NS4A-2K and NS4B-NS5. NS3 RNA helicase binds RNA and unwinds dsRNA in the 3' to 5' direction. In terms of biological role, non-structural protein 4A: Regulates the ATPase activity of the NS3 helicase activity. NS4A allows NS3 helicase to conserve energy during unwinding. Its function is as follows. Peptide 2k: Functions as a signal peptide for NS4B and is required for the interferon antagonism activity of the latter. Functionally, non-structural protein 4B: Induces the formation of ER-derived membrane vesicles where the viral replication takes place. Inhibits interferon (IFN)-induced host STAT1 phosphorylation and nuclear translocation, thereby preventing the establishment of cellular antiviral state by blocking the IFN-alpha/beta pathway. Inhibits STAT2 translocation in the nucleus after IFN-alpha treatment. RNA-directed RNA polymerase NS5: Replicates the viral (+) and (-) RNA genome. Performs the capping of genomes in the cytoplasm. NS5 methylates viral RNA cap at guanine N-7 and ribose 2'-O positions. Besides its role in RNA genome replication, also prevents the establishment of cellular antiviral state by blocking the interferon-alpha/beta (IFN-alpha/beta) signaling pathway. Inhibits host TYK2 and STAT2 phosphorylation, thereby preventing activation of JAK-STAT signaling pathway. In Japanese encephalitis virus (strain Nakayama) (JEV), this protein is Genome polyprotein.